The sequence spans 159 residues: Neuroglobin (159 aa).

The 149-residue stretch at 3 to 151 (KLSEKDKGLI…VVSAMTRGWA (149 aa)) folds into the Globin domain. Residues H66 and H98 each coordinate heme b.

This sequence belongs to the globin family. In terms of assembly, monomer. Homodimers and homotetramers. Mainly monomeric but also detected as part of homodimers and homotetramers. In terms of tissue distribution, detected in brain, eye and gill, but not in muscle and blood (at protein level). Particularly high expression in the periventral zone of tectum opticum, with significant expression detected in white matter, preglomerular nucleus, posterior tubular nucleus, torus longitudinalis, hypothalamus, pituitary gland, posterior tuberculum, hypothalamus, synencephalon and formatio reticularis. Detected also in brain regions of the visual system, predominantly in parts of tectum opticum and torus semicircularis, area dorsalis telencephali and medulla oblongata. Strong expression observed in sensory epithelium of peripheral olfactory organ, and outer and inner nuclear layers and ganglion cell layer of retina.

It is found in the cytoplasm. The protein localises to the cytosol. It localises to the mitochondrion matrix. It carries out the reaction Fe(III)-heme b-[protein] + nitric oxide + H2O = Fe(II)-heme b-[protein] + nitrite + 2 H(+). Monomeric globin with a bis-histidyl six-coordinate heme-iron atom through which it can bind dioxygen, carbon monoxide and nitric oxide. Could help transport oxygen and increase its availability to the metabolically active neuronal tissues, though its low quantity in tissues as well as its high affinity for dioxygen, which may limit its oxygen-releasing ability, argue against it. The ferrous/deoxygenated form exhibits a nitrite reductase activity and it could produce nitric oxide which in turn inhibits cellular respiration in response to hypoxia. In its ferrous/deoxygenated state, it may also exhibit GDI (Guanine nucleotide Dissociation Inhibitor) activity toward heterotrimeric G-alpha proteins, thereby regulating signal transduction to facilitate neuroprotective responses in the wake of hypoxia and associated oxidative stress. The polypeptide is Neuroglobin (ngb) (Danio rerio (Zebrafish)).